Reading from the N-terminus, the 394-residue chain is MVRWLTAGESHGPALVATVEGLPAGIRVSSTDIGAELARRRLGHGRGARMKFEQDEIELLGGLRHGVSLGGPVSVVVRNTEWPKWERVMAPDPIDPAELEGLGRNAPLTRPRPGHADLAGMQKYGFDDARPVLERASARETAARVALGTVARALLRQAYGIEVVSHVVAIGAVEVPPGTPPPTSLAVVDADPVRCADPASSALMVAEIDAAHRDADTLGGIVEVLAYGCPPGLGSYVHGDRRLDARLAGELMGIQAIKGVEFGDGFRTARRRGSVAHDEIEPLEGPGRRVRRASDRAGGVEGGMTTGEPLRVRAAMKPISSLSKPLATIDVATGDPAVAIAQRSDVCAVPAAGVVAEAMVALVLAGAALEKFGGDSVEETRRNYEGYLKSLAVR.

The NADP(+) site is built by arginine 40 and arginine 46. Residues 135–137, 255–256, glycine 302, 317–321, and arginine 343 contribute to the FMN site; these read RAS, QA, and KPISS.

The protein belongs to the chorismate synthase family. In terms of assembly, homotetramer. The cofactor is FMNH2.

The enzyme catalyses 5-O-(1-carboxyvinyl)-3-phosphoshikimate = chorismate + phosphate. The protein operates within metabolic intermediate biosynthesis; chorismate biosynthesis; chorismate from D-erythrose 4-phosphate and phosphoenolpyruvate: step 7/7. Functionally, catalyzes the anti-1,4-elimination of the C-3 phosphate and the C-6 proR hydrogen from 5-enolpyruvylshikimate-3-phosphate (EPSP) to yield chorismate, which is the branch point compound that serves as the starting substrate for the three terminal pathways of aromatic amino acid biosynthesis. This reaction introduces a second double bond into the aromatic ring system. In Parafrankia sp. (strain EAN1pec), this protein is Chorismate synthase.